A 143-amino-acid chain; its full sequence is Large ribosomal subunit protein uL11 (143 aa).

This sequence belongs to the universal ribosomal protein uL11 family. As to quaternary structure, part of the ribosomal stalk of the 50S ribosomal subunit. Interacts with L10 and the large rRNA to form the base of the stalk. L10 forms an elongated spine to which L12 dimers bind in a sequential fashion forming a multimeric L10(L12)X complex. In terms of processing, one or more lysine residues are methylated.

In terms of biological role, forms part of the ribosomal stalk which helps the ribosome interact with GTP-bound translation factors. The protein is Large ribosomal subunit protein uL11 of Marinobacter nauticus (strain ATCC 700491 / DSM 11845 / VT8) (Marinobacter aquaeolei).